We begin with the raw amino-acid sequence, 692 residues long: Threonine--tRNA ligase (692 aa).

The region spanning 2 to 59 is the TGS domain; the sequence is AEAHISITVNGEAKEVEASQTGVELFADDKNIIAVRLNGELRDLYTPLHDGDNVESVT. A catalytic region spans residues 255-561; it reads DHRKLGQEMD…LLEHYAGAFP (307 aa). 3 residues coordinate Zn(2+): cysteine 360, histidine 411, and histidine 538.

This sequence belongs to the class-II aminoacyl-tRNA synthetase family. As to quaternary structure, homodimer. Requires Zn(2+) as cofactor.

It localises to the cytoplasm. The catalysed reaction is tRNA(Thr) + L-threonine + ATP = L-threonyl-tRNA(Thr) + AMP + diphosphate + H(+). In terms of biological role, catalyzes the attachment of threonine to tRNA(Thr) in a two-step reaction: L-threonine is first activated by ATP to form Thr-AMP and then transferred to the acceptor end of tRNA(Thr). Also edits incorrectly charged L-seryl-tRNA(Thr). The protein is Threonine--tRNA ligase of Bifidobacterium animalis subsp. lactis (strain AD011).